The following is a 372-amino-acid chain: Anhydro-N-acetylmuramic acid kinase (372 aa).

Glycine 14–aspartate 21 provides a ligand contact to ATP.

This sequence belongs to the anhydro-N-acetylmuramic acid kinase family.

It carries out the reaction 1,6-anhydro-N-acetyl-beta-muramate + ATP + H2O = N-acetyl-D-muramate 6-phosphate + ADP + H(+). It participates in amino-sugar metabolism; 1,6-anhydro-N-acetylmuramate degradation. The protein operates within cell wall biogenesis; peptidoglycan recycling. Functionally, catalyzes the specific phosphorylation of 1,6-anhydro-N-acetylmuramic acid (anhMurNAc) with the simultaneous cleavage of the 1,6-anhydro ring, generating MurNAc-6-P. Is required for the utilization of anhMurNAc either imported from the medium or derived from its own cell wall murein, and thus plays a role in cell wall recycling. The chain is Anhydro-N-acetylmuramic acid kinase from Photorhabdus laumondii subsp. laumondii (strain DSM 15139 / CIP 105565 / TT01) (Photorhabdus luminescens subsp. laumondii).